Reading from the N-terminus, the 294-residue chain is RAB7A-interacting MON1-CCZ1 complex subunit 1 (294 aa).

At A2 the chain carries N-acetylalanine.

The protein belongs to the RIMOC1 family. As to quaternary structure, interacts with the MON1A-CCZ1B complex. Interacts with GDP-bound RAB7A and promotes its interaction with the MON1A-CCZ1B complex.

It is found in the cytoplasm. The protein resides in the cytosol. Functionally, plays an important role in the removal of damaged mitochondria via mitophagy by controlling the stability and localization of RAB7A. Required for the recruitment of RAB7A and ATG9A vesicles to damaged mitochondria and promotes the stability of RAB7A by inhibiting its proteasomal degradation during mitophagy. The protein is RAB7A-interacting MON1-CCZ1 complex subunit 1 of Homo sapiens (Human).